A 274-amino-acid polypeptide reads, in one-letter code: ATP synthase subunit a (274 aa).

Transmembrane regions (helical) follow at residues 43–63, 103–123, 149–169, 223–243, and 245–265; these read TLNI…LLVF, VIAP…MMDL, DVSI…FYSI, LIFI…LSVP, and AIFH…LTIV.

It belongs to the ATPase A chain family. F-type ATPases have 2 components, CF(1) - the catalytic core - and CF(0) - the membrane proton channel. CF(1) has five subunits: alpha(3), beta(3), gamma(1), delta(1), epsilon(1). CF(0) has three main subunits: a(1), b(2) and c(9-12). The alpha and beta chains form an alternating ring which encloses part of the gamma chain. CF(1) is attached to CF(0) by a central stalk formed by the gamma and epsilon chains, while a peripheral stalk is formed by the delta and b chains.

The protein localises to the cell inner membrane. Functionally, key component of the proton channel; it plays a direct role in the translocation of protons across the membrane. In Yersinia pestis bv. Antiqua (strain Antiqua), this protein is ATP synthase subunit a.